The primary structure comprises 320 residues: Ferrochelatase (320 aa).

Residues His194 and Glu275 each coordinate Fe cation.

This sequence belongs to the ferrochelatase family.

The protein resides in the cytoplasm. It catalyses the reaction heme b + 2 H(+) = protoporphyrin IX + Fe(2+). It participates in porphyrin-containing compound metabolism; protoheme biosynthesis; protoheme from protoporphyrin-IX: step 1/1. Functionally, catalyzes the ferrous insertion into protoporphyrin IX. This chain is Ferrochelatase, found in Enterobacter sp. (strain 638).